The chain runs to 479 residues: MAQHAVYFPDAFLTQMREAMPSTLSFDEFISACQRPLRRSIRINTLKISVADFLALIAPYGWSLTPIPWCHEGFWIERDDEEALPLGSTAEHLSGLFYIQEASSMLPVAALFADDNHPQRVMDMAAAPGSKTTQIAARMGNRGAILANEFSASRVKVLHANISRCGIANTALTHFDGRVFGAALPEMFDAILLDAPCSGEGVVRKDPDALKNWSPESNLDIAATQRELLDSAFHALRPGGTLVYSTCTLNRQENEEVCLWLKETYADAVEFLPLDDLFPDADRALTPEGFLHVFPQIYDCEGFFVARLRKISSLPAMPAPGYKVGTFPFTPLKGREALHVTQAANAVGLLWDENLHLWQREKEVWLFPAEIESLIGKVRFSRLGIKLAESHNKGYRWQHEATIALACPTHAHAFELSAQEAEEWYRGRDIYPQTPPAADDVLVTFQRQPLGLAKRIGSRIKNSYPRELVRDGKLFTGNS.

S-adenosyl-L-methionine is bound by residues 125–131, E149, D176, and D194; that span reads AAAPGSK. C247 functions as the Nucleophile in the catalytic mechanism.

The protein belongs to the class I-like SAM-binding methyltransferase superfamily. RsmB/NOP family.

It is found in the cytoplasm. It carries out the reaction cytidine(1407) in 16S rRNA + S-adenosyl-L-methionine = 5-methylcytidine(1407) in 16S rRNA + S-adenosyl-L-homocysteine + H(+). In terms of biological role, specifically methylates the cytosine at position 1407 (m5C1407) of 16S rRNA. This is Ribosomal RNA small subunit methyltransferase F from Salmonella agona (strain SL483).